A 606-amino-acid chain; its full sequence is Aspartate--tRNA(Asp/Asn) ligase (606 aa).

Glu172 is an L-aspartate binding site. Residues 196–199 form an aspartate region; the sequence is QLFK. Arg218 is an L-aspartate binding site. Residues 218–220 and Gln227 contribute to the ATP site; that span reads RDE. His448 contributes to the L-aspartate binding site. Position 482 (Glu482) interacts with ATP. Arg489 serves as a coordination point for L-aspartate. 534–537 contacts ATP; it reads GWDR.

It belongs to the class-II aminoacyl-tRNA synthetase family. Type 1 subfamily. As to quaternary structure, homodimer.

The protein resides in the cytoplasm. The enzyme catalyses tRNA(Asx) + L-aspartate + ATP = L-aspartyl-tRNA(Asx) + AMP + diphosphate. Aspartyl-tRNA synthetase with relaxed tRNA specificity since it is able to aspartylate not only its cognate tRNA(Asp) but also tRNA(Asn). Reaction proceeds in two steps: L-aspartate is first activated by ATP to form Asp-AMP and then transferred to the acceptor end of tRNA(Asp/Asn). The chain is Aspartate--tRNA(Asp/Asn) ligase from Saccharopolyspora erythraea (strain ATCC 11635 / DSM 40517 / JCM 4748 / NBRC 13426 / NCIMB 8594 / NRRL 2338).